We begin with the raw amino-acid sequence, 572 residues long: Methionine--tRNA ligase (572 aa).

The 'HIGH' region motif lies at 11-21 (PYINGVKHLGN). Residues cysteine 143, cysteine 146, cysteine 156, and cysteine 159 each coordinate Zn(2+). A 'KMSKS' region motif is present at residues 341 to 345 (KFSTS). Threonine 344 lines the ATP pocket.

It belongs to the class-I aminoacyl-tRNA synthetase family. MetG type 1 subfamily. In terms of assembly, monomer. Zn(2+) is required as a cofactor.

It is found in the cytoplasm. The catalysed reaction is tRNA(Met) + L-methionine + ATP = L-methionyl-tRNA(Met) + AMP + diphosphate. Functionally, is required not only for elongation of protein synthesis but also for the initiation of all mRNA translation through initiator tRNA(fMet) aminoacylation. This chain is Methionine--tRNA ligase, found in Maricaulis maris (strain MCS10) (Caulobacter maris).